A 307-amino-acid polypeptide reads, in one-letter code: 4-hydroxy-3-methylbut-2-enyl diphosphate reductase (307 aa).

Cysteine 13 serves as a coordination point for [4Fe-4S] cluster. Residues histidine 42 and histidine 75 each coordinate (2E)-4-hydroxy-3-methylbut-2-enyl diphosphate. Dimethylallyl diphosphate contacts are provided by histidine 42 and histidine 75. Isopentenyl diphosphate is bound by residues histidine 42 and histidine 75. Cysteine 97 is a binding site for [4Fe-4S] cluster. Residue histidine 125 coordinates (2E)-4-hydroxy-3-methylbut-2-enyl diphosphate. Histidine 125 serves as a coordination point for dimethylallyl diphosphate. Residue histidine 125 participates in isopentenyl diphosphate binding. Glutamate 127 functions as the Proton donor in the catalytic mechanism. Threonine 165 contributes to the (2E)-4-hydroxy-3-methylbut-2-enyl diphosphate binding site. Cysteine 195 lines the [4Fe-4S] cluster pocket. (2E)-4-hydroxy-3-methylbut-2-enyl diphosphate-binding residues include serine 223, serine 224, asparagine 225, and serine 267. The dimethylallyl diphosphate site is built by serine 223, serine 224, asparagine 225, and serine 267. Positions 223, 224, 225, and 267 each coordinate isopentenyl diphosphate.

It belongs to the IspH family. It depends on [4Fe-4S] cluster as a cofactor.

It carries out the reaction isopentenyl diphosphate + 2 oxidized [2Fe-2S]-[ferredoxin] + H2O = (2E)-4-hydroxy-3-methylbut-2-enyl diphosphate + 2 reduced [2Fe-2S]-[ferredoxin] + 2 H(+). The enzyme catalyses dimethylallyl diphosphate + 2 oxidized [2Fe-2S]-[ferredoxin] + H2O = (2E)-4-hydroxy-3-methylbut-2-enyl diphosphate + 2 reduced [2Fe-2S]-[ferredoxin] + 2 H(+). It participates in isoprenoid biosynthesis; dimethylallyl diphosphate biosynthesis; dimethylallyl diphosphate from (2E)-4-hydroxy-3-methylbutenyl diphosphate: step 1/1. It functions in the pathway isoprenoid biosynthesis; isopentenyl diphosphate biosynthesis via DXP pathway; isopentenyl diphosphate from 1-deoxy-D-xylulose 5-phosphate: step 6/6. In terms of biological role, catalyzes the conversion of 1-hydroxy-2-methyl-2-(E)-butenyl 4-diphosphate (HMBPP) into a mixture of isopentenyl diphosphate (IPP) and dimethylallyl diphosphate (DMAPP). Acts in the terminal step of the DOXP/MEP pathway for isoprenoid precursor biosynthesis. This chain is 4-hydroxy-3-methylbut-2-enyl diphosphate reductase, found in Chlamydia trachomatis serovar D (strain ATCC VR-885 / DSM 19411 / UW-3/Cx).